The following is a 307-amino-acid chain: 2-carboxy-1,4-naphthoquinone phytyltransferase (307 aa).

A run of 8 helical transmembrane segments spans residues 27-47 (MYTV…GLTG), 51-71 (GDVF…INLS), 98-118 (LVFL…MSMS), 125-145 (TVLE…GPPF), 147-167 (LGYL…LAIA), 177-197 (FSWN…IILF), 223-243 (LGSQ…AIGV), and 284-304 (FIAV…YGWA).

Belongs to the MenA family. Type 2 subfamily.

It localises to the cell inner membrane. The catalysed reaction is 2-carboxy-1,4-naphthoquinone + phytyl diphosphate + H(+) = demethylphylloquinone + CO2 + diphosphate. The protein operates within cofactor biosynthesis; phylloquinone biosynthesis. Functionally, involved in the synthesis of phylloquinone (vitamin K1). Catalyzes the transfer of a prenyl chain to 2-carboxy-1,4-naphthoquinone. This is 2-carboxy-1,4-naphthoquinone phytyltransferase from Synechocystis sp. (strain ATCC 27184 / PCC 6803 / Kazusa).